Reading from the N-terminus, the 426-residue chain is MRVLLTSFAHHTHYYGLVPLAWALLAAGHEVRVASQPALTDTITGSGLAAVPVGTDHLIHEYRVRMAGEPRPNHPAIAFDEARPEPLDWDHALGIEAILAPYFHLLANNDSMVDDLVDFARSWQPDLVLWEPTTYAGAVAAQVTGAAHARVLWGPDVMGSARRKFVALRDRQPPEHREDPTAEWLTWTLDRYGASFEEELLTGQFTIDPTPPSLRLDTGLPTVGMRYVPYNGTSVVPDWLSEPPARPRVCLTLGVSAREVLGGDGVSQGDILEALADLDIELVATLDASQRAEIRNYPKHTRFTDFVPMHALLPSCSAIIHHGGAGTYATAVINAVPQVMLAELWDAPVKARAVAEQGAGFFLPPAELTPQAVRDAVVRILDDPSVATAAHRLREETFGDPTPAGIVPELERLAAQHRRPPADARH.

The protein belongs to the glycosyltransferase 28 family. Forms a complex with DesVIII.

The enzyme catalyses 10-deoxymethynolide + dTDP-alpha-D-desosamine = 10-deoxymethymycin + dTDP + H(+). It functions in the pathway antibiotic biosynthesis. Functionally, involved in the biosynthesis of the macrolide antibiotics methymycin, neomethymycin, narbomycin, and pikromycin. Catalyzes the attachment of dTDP-D-desosamine onto 12- and 14-membered macrolactone rings 10-deoxymethynolide and narbonolide to produce 10-deoxymethymycin (YC-17) and narbomycin. DesVII is unique among glycosyltransferases in that it requires an additional protein component, DesVIII, for its activity. DesVII can recognize and process not only cyclic substrates of different ring size, but also a variety of linear substrates albeit with reduced, but measurable activities. Both L-sugars and D-sugars are recognized as substrates and variant substitutions at C-3 and C-4 are tolerated, but deoxygenation at C-6 is required. The sequence is that of 10-deoxymethynolide desosaminyltransferase from Streptomyces venezuelae.